The primary structure comprises 62 residues: Conotoxin Im11.9 (62 aa).

Residues 1-22 (MFRVTSVLLVIVLLNLVVLTNA) form the signal peptide. 4 disulfide bridges follow: Cys-23–Cys-33, Cys-27–Cys-38, Cys-32–Cys-41, and Cys-37–Cys-46. A propeptide spanning residues 23–49 (CHMDCSKMTCCSGICCFYCGRPMCPGT) is cleaved from the precursor.

It belongs to the conotoxin I2 superfamily. As to expression, expressed by the venom duct.

It is found in the secreted. Probable neurotoxin. The protein is Conotoxin Im11.9 of Conus imperialis (Imperial cone).